Here is a 154-residue protein sequence, read N- to C-terminus: Ribosomal RNA large subunit methyltransferase H (154 aa).

S-adenosyl-L-methionine-binding positions include leucine 70, glycine 102, and 121–126 (LSRMTL).

It belongs to the RNA methyltransferase RlmH family. Homodimer.

It localises to the cytoplasm. It catalyses the reaction pseudouridine(1915) in 23S rRNA + S-adenosyl-L-methionine = N(3)-methylpseudouridine(1915) in 23S rRNA + S-adenosyl-L-homocysteine + H(+). In terms of biological role, specifically methylates the pseudouridine at position 1915 (m3Psi1915) in 23S rRNA. In Geobacter sp. (strain M21), this protein is Ribosomal RNA large subunit methyltransferase H.